We begin with the raw amino-acid sequence, 914 residues long: Alanine--tRNA ligase (914 aa).

The Zn(2+) site is built by H608, H612, C711, and H715.

The protein belongs to the class-II aminoacyl-tRNA synthetase family. Zn(2+) serves as cofactor.

Its subcellular location is the cytoplasm. It carries out the reaction tRNA(Ala) + L-alanine + ATP = L-alanyl-tRNA(Ala) + AMP + diphosphate. In terms of biological role, catalyzes the attachment of alanine to tRNA(Ala) in a two-step reaction: alanine is first activated by ATP to form Ala-AMP and then transferred to the acceptor end of tRNA(Ala). Also edits incorrectly charged Ser-tRNA(Ala) and Gly-tRNA(Ala) via its editing domain. This Methanoregula boonei (strain DSM 21154 / JCM 14090 / 6A8) protein is Alanine--tRNA ligase.